Consider the following 377-residue polypeptide: Chaperone protein DnaJ (377 aa).

A J domain is found at 5–70; that stretch reads DYYEVLGVAK…QKRAAYDRYG (66 aa). Residues 137 to 215 form a CR-type zinc finger; the sequence is GFDTEIRVPS…CDGVGRTRRN (79 aa). Zn(2+) is bound by residues C150, C153, C167, C170, C189, C192, C203, and C206. 4 CXXCXGXG motif repeats span residues 150 to 157, 167 to 174, 189 to 196, and 203 to 210; these read CDTCHGSG, CRTCGGSG, CPTCHGTG, and CPSCDGVG.

This sequence belongs to the DnaJ family. In terms of assembly, homodimer. Zn(2+) is required as a cofactor.

It is found in the cytoplasm. Participates actively in the response to hyperosmotic and heat shock by preventing the aggregation of stress-denatured proteins and by disaggregating proteins, also in an autonomous, DnaK-independent fashion. Unfolded proteins bind initially to DnaJ; upon interaction with the DnaJ-bound protein, DnaK hydrolyzes its bound ATP, resulting in the formation of a stable complex. GrpE releases ADP from DnaK; ATP binding to DnaK triggers the release of the substrate protein, thus completing the reaction cycle. Several rounds of ATP-dependent interactions between DnaJ, DnaK and GrpE are required for fully efficient folding. Also involved, together with DnaK and GrpE, in the DNA replication of plasmids through activation of initiation proteins. This is Chaperone protein DnaJ from Bordetella parapertussis (strain 12822 / ATCC BAA-587 / NCTC 13253).